The primary structure comprises 357 residues: Probable nitronate monooxygenase (357 aa).

Residues asparagine 71, glutamine 175, glycine 180, glycine 219, and 238 to 241 (QMGT) contribute to the FMN site.

It belongs to the nitronate monooxygenase family. NMO class I subfamily. FMN serves as cofactor.

It carries out the reaction 3 propionate 3-nitronate + 3 O2 + H2O = 3 3-oxopropanoate + 2 nitrate + nitrite + H2O2 + 3 H(+). In terms of biological role, nitronate monooxygenase that uses molecular oxygen to catalyze the oxidative denitrification of alkyl nitronates. Acts on propionate 3-nitronate (P3N), the presumed physiological substrate. Probably functions in the detoxification of P3N, a metabolic poison produced by plants and fungi as a defense mechanism. This chain is Probable nitronate monooxygenase, found in Staphylococcus haemolyticus (strain JCSC1435).